The chain runs to 178 residues: Large ribosomal subunit protein uL5 (178 aa).

This sequence belongs to the universal ribosomal protein uL5 family. In terms of assembly, part of the 50S ribosomal subunit; part of the 5S rRNA/L5/L18/L25 subcomplex. Contacts the 5S rRNA and the P site tRNA. Forms a bridge to the 30S subunit in the 70S ribosome.

In terms of biological role, this is one of the proteins that bind and probably mediate the attachment of the 5S RNA into the large ribosomal subunit, where it forms part of the central protuberance. In the 70S ribosome it contacts protein S13 of the 30S subunit (bridge B1b), connecting the 2 subunits; this bridge is implicated in subunit movement. Contacts the P site tRNA; the 5S rRNA and some of its associated proteins might help stabilize positioning of ribosome-bound tRNAs. This is Large ribosomal subunit protein uL5 from Prochlorococcus marinus (strain MIT 9515).